Here is a 238-residue protein sequence, read N- to C-terminus: MTTTYANADPGELEKFSELAHRWWDPNSEFKPLHEINPLRLDWIQSTAPLAGKRVVDVGCGGGILSESMARAGANVKGIDLSRKALRVADLHSLEAGVAVDYEEIAAEALAAREPGSFDVVTCMEMLEHVPDPASVVRACATLVKPGGHVFFSTIHRNAKAYLLAVIGAEYVLNMLPRGTHDYAKFIRPSELAGFARTAGLEPAQLRGLEYNPLTGRYALTHDTSVNYLIATRRPDAP.

S-adenosyl-L-methionine contacts are provided by Arg-40, Gly-59, Asp-80, and Met-124.

This sequence belongs to the methyltransferase superfamily. UbiG/COQ3 family.

It carries out the reaction a 3-demethylubiquinol + S-adenosyl-L-methionine = a ubiquinol + S-adenosyl-L-homocysteine + H(+). The catalysed reaction is a 3-(all-trans-polyprenyl)benzene-1,2-diol + S-adenosyl-L-methionine = a 2-methoxy-6-(all-trans-polyprenyl)phenol + S-adenosyl-L-homocysteine + H(+). The protein operates within cofactor biosynthesis; ubiquinone biosynthesis. Its function is as follows. O-methyltransferase that catalyzes the 2 O-methylation steps in the ubiquinone biosynthetic pathway. The polypeptide is Ubiquinone biosynthesis O-methyltransferase (Ralstonia nicotianae (strain ATCC BAA-1114 / GMI1000) (Ralstonia solanacearum)).